A 382-amino-acid polypeptide reads, in one-letter code: Lipid-A-disaccharide synthase (382 aa).

The protein belongs to the LpxB family.

It carries out the reaction 2-N,3-O-bis[(3R)-3-hydroxytetradecanoyl]-alpha-D-glucosaminyl 1-phosphate + UDP-2-N,3-O-bis[(3R)-3-hydroxytetradecanoyl]-alpha-D-glucosamine = lipid A disaccharide (E. coli) + UDP + H(+). It catalyses the reaction a lipid X + a UDP-2-N,3-O-bis[(3R)-3-hydroxyacyl]-alpha-D-glucosamine = a lipid A disaccharide + UDP + H(+). The protein operates within glycolipid biosynthesis; lipid IV(A) biosynthesis; lipid IV(A) from (3R)-3-hydroxytetradecanoyl-[acyl-carrier-protein] and UDP-N-acetyl-alpha-D-glucosamine: step 5/6. Its function is as follows. Condensation of UDP-2,3-diacylglucosamine and 2,3-diacylglucosamine-1-phosphate to form lipid A disaccharide, a precursor of lipid A, a phosphorylated glycolipid that anchors the lipopolysaccharide to the outer membrane of the cell. The sequence is that of Lipid-A-disaccharide synthase from Serratia proteamaculans (strain 568).